A 139-amino-acid chain; its full sequence is Large ribosomal subunit protein uL16 (139 aa).

Residues 1–17 show a composition bias toward basic residues; that stretch reads MLQPKRTKYRKQQKGRM. The segment at 1-25 is disordered; the sequence is MLQPKRTKYRKQQKGRMKGLSQRGH.

It belongs to the universal ribosomal protein uL16 family. In terms of assembly, part of the 50S ribosomal subunit.

Functionally, binds 23S rRNA and is also seen to make contacts with the A and possibly P site tRNAs. The polypeptide is Large ribosomal subunit protein uL16 (Christiangramia forsetii (strain DSM 17595 / CGMCC 1.15422 / KT0803) (Gramella forsetii)).